Consider the following 113-residue polypeptide: UPF0342 protein MGAS2096_Spy0691 (113 aa).

It belongs to the UPF0342 family.

The chain is UPF0342 protein MGAS2096_Spy0691 from Streptococcus pyogenes serotype M12 (strain MGAS2096).